The following is a 134-amino-acid chain: Profilin-2 (134 aa).

A disulfide bond links C13 and C118. Residues 84-100 (AVIRGKKGSGGITIKET) carry the Involved in PIP2 interaction motif. Position 114 is a phosphothreonine (T114).

The protein belongs to the profilin family. As to quaternary structure, occurs in many kinds of cells as a complex with monomeric actin in a 1:1 ratio. In terms of processing, phosphorylated by MAP kinases.

The protein resides in the cytoplasm. The protein localises to the cytoskeleton. In terms of biological role, binds to actin and affects the structure of the cytoskeleton. At high concentrations, profilin prevents the polymerization of actin, whereas it enhances it at low concentrations. The protein is Profilin-2 of Olea europaea (Common olive).